Consider the following 121-residue polypeptide: RING-box protein HRT1 (121 aa).

A disordered region spans residues 1–31; sequence MSNEVDRMDVDEDESQNIAQSSNQSAPVETK. Serine 15 carries the phosphoserine modification. Over residues 16–26 the composition is skewed to low complexity; that stretch reads QNIAQSSNQSA. Residues cysteine 55, cysteine 58, cysteine 66, cysteine 69, cysteine 81, cysteine 88, histidine 90, histidine 93, histidine 95, cysteine 107, and aspartate 110 each coordinate Zn(2+). The RING-type zinc-finger motif lies at 55 to 111; that stretch reads CAICRNHIMEPCIECQPKAMTDTDNECVAAWGVCNHAFHLHCINKWIKTRDACPLDN.

This sequence belongs to the RING-box family. Component of multiple cullin-RING ligases (CRLs) composed of 4 subunits: the RING protein HRT1, a cullin, a linker protein, and one of many alternative substrate receptors. Component of SCF E3 ubiquitin ligase complexes containing the cullin CDC53, the linker protein SKP1/CBF3D, and substrate receptors containing F-box motifs like DAS1 or GRR1. Component of RTT101(MMS1) E3 ubiquitin ligase complexes containing the cullin RTT101, the linker protein MMS1, and substrate receptors belonging to a protein family described as DCAF (DDB1- and CUL4-associated factor) like MMS22. Component of CRL3 E3 ubiquitin ligase complexes containing the cullin CUL3, the linker protein ELC1, and substrate receptors containing SOCS-box motifs like ELA1. Interacts with CDC53, CUL3, RTT101, CDC4 and CDC34/UBC3.

The protein localises to the cytoplasm. It is found in the nucleus. Its pathway is protein modification; protein ubiquitination. Core component of multiple cullin-RING-based E3 ubiquitin-protein ligase complexes (CRLs), which mediate the ubiquitination of target proteins. Recruits the E2 ubiquitin-conjugating enzyme CDC34/UBC3 to the complex and brings it into close proximity to the substrate. Also stimulates CDC34/UBC3 autoubiquitination and promotes the neddylation of CDC53 and RTT101. Component of the SCF(CDC4) ubiquitin ligase required for ubiquitination of the cyclin-dependent kinase inhibitor SIC1 and for the G1-to-S phase transition. Component of the RTT101(MMS1-MMS22) ubiquitin ligase that promotes fork progression through damaged DNA or natural pause sites. Component of the CRL3(ELA1) ubiquitin ligase required for ubiquitination of RPB1, the largest subunit of RNA polymerase II (Pol II), which targets Pol II for proteasomal degradation in DNA-damaged cells. This Saccharomyces cerevisiae (strain ATCC 204508 / S288c) (Baker's yeast) protein is RING-box protein HRT1 (HRT1).